Reading from the N-terminus, the 145-residue chain is Probable inactive ribonuclease-like protein 12 (145 aa).

The first 19 residues, 1–19, serve as a signal peptide directing secretion; it reads MILMVIVFLLLLFWENELT. N-linked (GlcNAc...) asparagine glycosylation occurs at asparagine 88.

It belongs to the pancreatic ribonuclease family.

The protein resides in the secreted. Its function is as follows. Does not exhibit any ribonuclease activity. The protein is Probable inactive ribonuclease-like protein 12 (Rnase12) of Rattus norvegicus (Rat).